A 414-amino-acid polypeptide reads, in one-letter code: Multifunctional CCA protein (414 aa).

Residues G8 and R11 each contribute to the ATP site. Residues G8 and R11 each coordinate CTP. Mg(2+)-binding residues include D21 and D23. 3 residues coordinate ATP: R91, R143, and R146. Residues R91, R143, and R146 each coordinate CTP. The 102-residue stretch at 232 to 333 (TGVHVMMVID…TRLVERCDAL (102 aa)) folds into the HD domain.

Belongs to the tRNA nucleotidyltransferase/poly(A) polymerase family. Bacterial CCA-adding enzyme type 1 subfamily. As to quaternary structure, monomer. Can also form homodimers and oligomers. Mg(2+) is required as a cofactor. Ni(2+) serves as cofactor.

It carries out the reaction a tRNA precursor + 2 CTP + ATP = a tRNA with a 3' CCA end + 3 diphosphate. The enzyme catalyses a tRNA with a 3' CCA end + 2 CTP + ATP = a tRNA with a 3' CCACCA end + 3 diphosphate. Its function is as follows. Catalyzes the addition and repair of the essential 3'-terminal CCA sequence in tRNAs without using a nucleic acid template. Adds these three nucleotides in the order of C, C, and A to the tRNA nucleotide-73, using CTP and ATP as substrates and producing inorganic pyrophosphate. tRNA 3'-terminal CCA addition is required both for tRNA processing and repair. Also involved in tRNA surveillance by mediating tandem CCA addition to generate a CCACCA at the 3' terminus of unstable tRNAs. While stable tRNAs receive only 3'-terminal CCA, unstable tRNAs are marked with CCACCA and rapidly degraded. The polypeptide is Multifunctional CCA protein (Cupriavidus metallidurans (strain ATCC 43123 / DSM 2839 / NBRC 102507 / CH34) (Ralstonia metallidurans)).